The sequence spans 469 residues: Ribosomal protein uS12 methylthiotransferase RimO (469 aa).

The MTTase N-terminal domain maps to 3-119 (TRVYMHTLGC…VARIVSDAQA (117 aa)). C12, C48, C82, C154, C158, and C161 together coordinate [4Fe-4S] cluster. Residues 140–370 (SLPSHTAYLK…MAVQQAISRA (231 aa)) enclose the Radical SAM core domain. Positions 373-441 (QAMIGRRVEV…EYDLVGRVVA (69 aa)) constitute a TRAM domain. Residues 444-469 (PSRAARPLPAAPRAAPARKGGLNVLR) form a disordered region. Positions 447-461 (AARPLPAAPRAAPAR) are enriched in low complexity.

This sequence belongs to the methylthiotransferase family. RimO subfamily. [4Fe-4S] cluster is required as a cofactor.

The protein localises to the cytoplasm. It catalyses the reaction L-aspartate(89)-[ribosomal protein uS12]-hydrogen + (sulfur carrier)-SH + AH2 + 2 S-adenosyl-L-methionine = 3-methylsulfanyl-L-aspartate(89)-[ribosomal protein uS12]-hydrogen + (sulfur carrier)-H + 5'-deoxyadenosine + L-methionine + A + S-adenosyl-L-homocysteine + 2 H(+). Functionally, catalyzes the methylthiolation of an aspartic acid residue of ribosomal protein uS12. This chain is Ribosomal protein uS12 methylthiotransferase RimO, found in Anaeromyxobacter sp. (strain K).